The primary structure comprises 159 residues: Ribosomal RNA large subunit methyltransferase H (159 aa).

Residues Leu-76, Gly-108, and Phe-127 to Phe-132 contribute to the S-adenosyl-L-methionine site.

It belongs to the RNA methyltransferase RlmH family. As to quaternary structure, homodimer.

The protein resides in the cytoplasm. It catalyses the reaction pseudouridine(1915) in 23S rRNA + S-adenosyl-L-methionine = N(3)-methylpseudouridine(1915) in 23S rRNA + S-adenosyl-L-homocysteine + H(+). Its function is as follows. Specifically methylates the pseudouridine at position 1915 (m3Psi1915) in 23S rRNA. The chain is Ribosomal RNA large subunit methyltransferase H from Clostridium novyi (strain NT).